A 751-amino-acid chain; its full sequence is MYQVSLKQFVFLLKIKSTTMEPHRKHSVGDTTLHTCHPCRRTIPYRIYAVFHTCGIIALMYHHVHSLLTANTTLITSLLLLSDIVLAFMWATTTSLRYKPVRRTEYPEKYAAEPEDFPKLDVFICTADPYKEPPMMVVNTALSVMAYEYPSDKISVYVSDDGGSSLTLFALMEAAKFSKHWLPFCKKNNVQDRSPEVYFSSKLRSRSDEAENIKMMYEDMKSRVEHVVESGKVETAFITCDQFRGVFDLWTDKFTRHDHPTIIQVLQNSENDMDDTKKYIMPNLIYVSREKSKVSSHHFKAGALNTLLRVSGVMTNSPIILTLDCDMYSNDPATPVRALCYLTDPKIKTGLGFVQFPQTFQGISKNDIYACAYKRLFEINMIGFDGLMGPNHVGTGCFFNRRGFYGAPSNLILPEIDELKPNRIVDKPINAQDVLALAHRVAGCIYELNTNWGSKIGFRYGSLVEDYYTGYRLHCEGWRSVFCRPKRAAFCGDSPKSLIDVVSQQKRWAIGLLEVAISRYSPITYGVKSMGLVTGVGYCQYACWAFWSLPLIVYGFLPQLALLYQSSVFPKSSDPWFWLYIVLFLGAYGQDLLDFVLEGGTYGGWWNDQRMWSIRGFSSHLFGFIEFTLKTLNLSTHGFNVTSKANDDEEQSKRYEKEIFEFGPSSSMFLPLTTVAIVNLLAFVWGLYGLFAWGEGLVLELMLASFAVVNCLPIYEAMVLRIDDGKLPKRVCFVAGILTFVLIVSGYVFLK.

2 helical membrane passes run 47–67 (IYAV…VHSL) and 72–92 (TTLI…MWAT). Residues aspartate 161 and aspartate 466 contribute to the active site. 6 consecutive transmembrane segments (helical) span residues 543–563 (CWAF…LALL), 577–597 (FWLY…DFVL), 617–639 (FSSH…THGF), 674–694 (TVAI…FAWG), 697–717 (LVLE…IYEA), and 731–751 (VCFV…VFLK).

Belongs to the glycosyltransferase 2 family. Plant cellulose synthase-like G subfamily.

The protein resides in the golgi apparatus membrane. Thought to be a Golgi-localized beta-glycan synthase that polymerize the backbones of noncellulosic polysaccharides (hemicelluloses) of plant cell wall. This chain is Cellulose synthase-like protein G3 (CSLG3), found in Arabidopsis thaliana (Mouse-ear cress).